Here is a 416-residue protein sequence, read N- to C-terminus: UDP-N-acetylglucosamine 1-carboxyvinyltransferase (416 aa).

22–23 (KN) is a phosphoenolpyruvate binding site. Arg91 lines the UDP-N-acetyl-alpha-D-glucosamine pocket. Cys115 (proton donor) is an active-site residue. Position 115 is a 2-(S-cysteinyl)pyruvic acid O-phosphothioketal (Cys115). Residues Asp304 and Ile326 each contribute to the UDP-N-acetyl-alpha-D-glucosamine site.

The protein belongs to the EPSP synthase family. MurA subfamily.

The protein localises to the cytoplasm. The enzyme catalyses phosphoenolpyruvate + UDP-N-acetyl-alpha-D-glucosamine = UDP-N-acetyl-3-O-(1-carboxyvinyl)-alpha-D-glucosamine + phosphate. Its pathway is cell wall biogenesis; peptidoglycan biosynthesis. Its function is as follows. Cell wall formation. Adds enolpyruvyl to UDP-N-acetylglucosamine. The protein is UDP-N-acetylglucosamine 1-carboxyvinyltransferase of Thermodesulfovibrio yellowstonii (strain ATCC 51303 / DSM 11347 / YP87).